A 92-amino-acid chain; its full sequence is Small ribosomal subunit protein bS18c (92 aa).

This sequence belongs to the bacterial ribosomal protein bS18 family. In terms of assembly, part of the 30S ribosomal subunit.

It localises to the plastid. This chain is Small ribosomal subunit protein bS18c (rps18), found in Epifagus virginiana (Beechdrops).